The following is a 460-amino-acid chain: Nucleosome assembly protein 1-like 2 (460 aa).

2 stretches are compositionally biased toward basic and acidic residues: residues 1–11 and 27–36; these read MAESENRKELS and LGEHLERGED. Disordered regions lie at residues 1–88 and 214–238; these read MAES…ADRP and EEEEEEEEDDIEATGEENKEEEDPK. The segment covering 214 to 236 has biased composition (acidic residues); the sequence is EEEEEEEEDDIEATGEENKEEED. The Nuclear localization signal motif lies at 346 to 352; that stretch reads IKKKQKH.

It belongs to the nucleosome assembly protein (NAP) family.

The protein resides in the nucleus. Functionally, acidic protein which may be involved in interactions with other proteins or DNA. In Homo sapiens (Human), this protein is Nucleosome assembly protein 1-like 2 (NAP1L2).